Consider the following 336-residue polypeptide: Glycerol-3-phosphate dehydrogenase [NAD(P)+] (336 aa).

Residues S11, W12, R33, R34, and K107 each coordinate NADPH. The sn-glycerol 3-phosphate site is built by K107 and G137. An NADPH-binding site is contributed by A141. Residues K192, D245, S255, R256, and N257 each coordinate sn-glycerol 3-phosphate. K192 (proton acceptor) is an active-site residue. NADPH is bound at residue R256. E282 provides a ligand contact to NADPH.

The protein belongs to the NAD-dependent glycerol-3-phosphate dehydrogenase family.

Its subcellular location is the cytoplasm. The catalysed reaction is sn-glycerol 3-phosphate + NAD(+) = dihydroxyacetone phosphate + NADH + H(+). It carries out the reaction sn-glycerol 3-phosphate + NADP(+) = dihydroxyacetone phosphate + NADPH + H(+). Its pathway is membrane lipid metabolism; glycerophospholipid metabolism. In terms of biological role, catalyzes the reduction of the glycolytic intermediate dihydroxyacetone phosphate (DHAP) to sn-glycerol 3-phosphate (G3P), the key precursor for phospholipid synthesis. This chain is Glycerol-3-phosphate dehydrogenase [NAD(P)+], found in Thermobifida fusca (strain YX).